The sequence spans 914 residues: Solute carrier family 12 member 9 (914 aa).

The Cytoplasmic segment spans residues 1 to 36; the sequence is MASESSPLLAYRLLGEEGVALPANGAGGPGGASARK. A Phosphoserine modification is found at Ser6. A helical transmembrane segment spans residues 37–57; sequence LSTFLGVVVPTVLSMFSIVVF. Topologically, residues 58 to 72 are extracellular; sequence LRIGFVVGHAGLLQA. The chain crosses the membrane as a helical span at residues 73–93; the sequence is LAMLLVAYFILALTVLSVCAI. Over 94–119 the chain is Cytoplasmic; sequence ATNGAVQGGGAYFMISRTLGPEVGGS. Residues 120–140 form a helical membrane-spanning segment; it reads IGLMFYLANVCGCAVSLLGLV. Residues 141-167 lie on the Extracellular side of the membrane; it reads ESVLDVFGADATGPSGLRVLPQGYGWN. The chain crosses the membrane as a helical span at residues 168 to 188; that stretch reads LLYGSLLLGLVGGVCTLGAGL. Residues 189-193 lie on the Cytoplasmic side of the membrane; sequence YARAS. A helical membrane pass occupies residues 194–214; sequence FLTFLLVSGSLASVLISFVAV. Residues 215–262 are Extracellular-facing; the sequence is GPRDIRLTPRPGPNGSSLPPRFGHFTGFNSSTLKDNLGAGYAEDYTTG. N-linked (GlcNAc...) asparagine glycans are attached at residues Asn228 and Asn243. The chain crosses the membrane as a helical span at residues 263–283; that stretch reads AVMNFASVFAVLFNGCTGIMA. Residues 284-297 are Cytoplasmic-facing; the sequence is GANMSGELKDPSRA. A helical membrane pass occupies residues 298 to 318; the sequence is IPLGTIVAVAYTFFVYVLLFF. At 319 to 338 the chain is on the extracellular side; sequence LSSFTCDRTLLQEDYGFFRA. A helical membrane pass occupies residues 339 to 359; sequence ISLWPPLVLIGIYATALSASM. The Cytoplasmic segment spans residues 360–390; it reads SSLIGASRILHALARDDLFGVILAPAKVVSR. A helical transmembrane segment spans residues 391-411; the sequence is GGNPWAAVLYSWGLVQLVLLA. At 412 to 416 the chain is on the extracellular side; sequence GKLNT. The chain crosses the membrane as a helical span at residues 417 to 437; that stretch reads LAAVVTVFYLVAYAAVDLSCL. Residues 438–466 are Cytoplasmic-facing; the sequence is SLEWASAPNFRPTFSLFSWHTCLLGVASC. The chain crosses the membrane as a helical span at residues 467–487; it reads LLMMFLISPGAAGGSLLLMGL. Residues 488-740 are Extracellular-facing; the sequence is LAALLTARGG…LLRPRGGPGY (253 aa). Positions 642 to 678 are disordered; the sequence is LTDPAFSEPADSTREGSSPALSTLFPPPRAPGSPRAL. Residues 741–761 traverse the membrane as a helical segment; sequence VDVCGLFLLQMATILGMVPAW. Residues 762–914 are Cytoplasmic-facing; that stretch reads HSARLRIFLC…GVTPVTCTDL (153 aa). Residues 844 to 863 are disordered; it reads QQGRGTGGGPGGPEGGDAEG. Positions 847-858 are enriched in gly residues; it reads RGTGGGPGGPEG.

The protein belongs to the SLC12A transporter family. As to quaternary structure, interacts with SLC12A1. As to expression, highly expressed in placenta, brain and kidney. Lower expression in lung, liver and heart.

It localises to the cell membrane. The protein resides in the lysosome membrane. Functionally, may be an inhibitor of SLC12A1. Seems to correspond to a subunit of a multimeric transport system and thus, additional subunits may be required for its function. May play a role in lysosomal ion flux and osmoregulation. The sequence is that of Solute carrier family 12 member 9 (SLC12A9) from Homo sapiens (Human).